Reading from the N-terminus, the 114-residue chain is Phosphoribosyl-ATP pyrophosphatase (114 aa).

This sequence belongs to the PRA-PH family.

Its subcellular location is the cytoplasm. It carries out the reaction 1-(5-phospho-beta-D-ribosyl)-ATP + H2O = 1-(5-phospho-beta-D-ribosyl)-5'-AMP + diphosphate + H(+). It participates in amino-acid biosynthesis; L-histidine biosynthesis; L-histidine from 5-phospho-alpha-D-ribose 1-diphosphate: step 2/9. This chain is Phosphoribosyl-ATP pyrophosphatase, found in Leuconostoc mesenteroides subsp. mesenteroides (strain ATCC 8293 / DSM 20343 / BCRC 11652 / CCM 1803 / JCM 6124 / NCDO 523 / NBRC 100496 / NCIMB 8023 / NCTC 12954 / NRRL B-1118 / 37Y).